A 308-amino-acid polypeptide reads, in one-letter code: Mitochondrial import receptor subunit TOM40B (308 aa).

Residues 281–308 (PLPVTLALGAFLNHWRNRFHCGFSITVG) are required for mitochondrial targeting.

It belongs to the Tom40 family. In terms of assembly, forms part of the preprotein translocase of the outer mitochondrial membrane (TOM complex) containing TOMM22, TOMM40, TOMM40L and TOMM70. Interacts with mitochondrial targeting sequences. Widely expressed. Higher levels in heart, brain and liver, very low level in testis.

Its subcellular location is the mitochondrion outer membrane. In terms of biological role, potential channel-forming protein implicated in import of protein precursors into mitochondria. This is Mitochondrial import receptor subunit TOM40B from Rattus norvegicus (Rat).